Here is a 325-residue protein sequence, read N- to C-terminus: MYKQPDKEKWTGRIDSESDEKSFRVHQKIRLLDIGQIQTQAENAFALLGFQCDEGVRRNQGRQGAYHAPVEVKKALANLPWHLPSHTILYDVGEITCEGGELENSQKHLGQAVERLICHNITPVVIGGGHETAYGHYLGVRQAVGSETKLGIINIDAHFDMRPYEQGPSSGTMFRQILDEDGNVGYCCLGIQPLGNTAALFETANRYGCTYVLEEELTLATLERAYEIIDDFIQNYDVLMLTLCMDVLSASAAPGVSAPSPFGLDPKIVRALLRYIISKPQTISFDICEVNPLVDENRKTIALAAAFCMEALVHFHRRQRAATGR.

Mn(2+) is bound by residues His-130, Asp-156, His-158, Asp-160, Cys-244, and Asp-246.

The protein belongs to the arginase family. Mn(2+) is required as a cofactor.

The catalysed reaction is N-formimidoyl-L-glutamate + H2O = formamide + L-glutamate. The protein operates within amino-acid degradation; L-histidine degradation into L-glutamate; L-glutamate from N-formimidoyl-L-glutamate (hydrolase route): step 1/1. Catalyzes the conversion of N-formimidoyl-L-glutamate to L-glutamate and formamide. The protein is Formimidoylglutamase of Geobacillus sp. (strain WCH70).